The sequence spans 242 residues: Biosynthetic peptidoglycan transglycosylase (242 aa).

A helical membrane pass occupies residues 19 to 39 (LMVVLAVFWGGGIALFSVAPV).

It belongs to the glycosyltransferase 51 family.

Its subcellular location is the cell inner membrane. The catalysed reaction is [GlcNAc-(1-&gt;4)-Mur2Ac(oyl-L-Ala-gamma-D-Glu-L-Lys-D-Ala-D-Ala)](n)-di-trans,octa-cis-undecaprenyl diphosphate + beta-D-GlcNAc-(1-&gt;4)-Mur2Ac(oyl-L-Ala-gamma-D-Glu-L-Lys-D-Ala-D-Ala)-di-trans,octa-cis-undecaprenyl diphosphate = [GlcNAc-(1-&gt;4)-Mur2Ac(oyl-L-Ala-gamma-D-Glu-L-Lys-D-Ala-D-Ala)](n+1)-di-trans,octa-cis-undecaprenyl diphosphate + di-trans,octa-cis-undecaprenyl diphosphate + H(+). It participates in cell wall biogenesis; peptidoglycan biosynthesis. Its function is as follows. Peptidoglycan polymerase that catalyzes glycan chain elongation from lipid-linked precursors. This is Biosynthetic peptidoglycan transglycosylase from Escherichia coli O17:K52:H18 (strain UMN026 / ExPEC).